The following is a 923-amino-acid chain: ATP-dependent Clp protease ATP-binding subunit ClpA homolog CD4B, chloroplastic (923 aa).

Residues 92-234 (FERFTEKAIK…RTQVIRMVGE (143 aa)) form the Clp R domain. Repeat stretches follow at residues 95-160 (FTEK…IGRG) and 170-234 (FTPR…MVGE). The segment at 255 to 502 (LEEYGTNLTK…RVRLRHAQLP (248 aa)) is i. 300-307 (GEPGVGKT) contributes to the ATP binding site. A UVR domain is found at 509–544 (EKELRQITKEKNEAVRGQDFEKAGELRDREMDLKAQ). Residues 569-760 (VTEADIQHIV…LLIMTSNVGS (192 aa)) are II. 643–650 (GPTGVGKS) contacts ATP.

It belongs to the ClpA/ClpB family.

It localises to the plastid. Its subcellular location is the chloroplast. May interact with a ClpP-like protease involved in degradation of denatured proteins in the chloroplast. In Solanum lycopersicum (Tomato), this protein is ATP-dependent Clp protease ATP-binding subunit ClpA homolog CD4B, chloroplastic (CD4B).